We begin with the raw amino-acid sequence, 291 residues long: ATP synthase subunit b 2 (291 aa).

The helical transmembrane segment at 2–22 (LIDGFTVVAQIVNFLILVWLL) threads the bilayer.

Belongs to the ATPase B chain family. As to quaternary structure, F-type ATPases have 2 components, F(1) - the catalytic core - and F(0) - the membrane proton channel. F(1) has five subunits: alpha(3), beta(3), gamma(1), delta(1), epsilon(1). F(0) has three main subunits: a(1), b(2) and c(10-14). The alpha and beta chains form an alternating ring which encloses part of the gamma chain. F(1) is attached to F(0) by a central stalk formed by the gamma and epsilon chains, while a peripheral stalk is formed by the delta and b chains.

The protein resides in the cell inner membrane. F(1)F(0) ATP synthase produces ATP from ADP in the presence of a proton or sodium gradient. F-type ATPases consist of two structural domains, F(1) containing the extramembraneous catalytic core and F(0) containing the membrane proton channel, linked together by a central stalk and a peripheral stalk. During catalysis, ATP synthesis in the catalytic domain of F(1) is coupled via a rotary mechanism of the central stalk subunits to proton translocation. Its function is as follows. Component of the F(0) channel, it forms part of the peripheral stalk, linking F(1) to F(0). The chain is ATP synthase subunit b 2 from Nitrosospira multiformis (strain ATCC 25196 / NCIMB 11849 / C 71).